The following is a 527-amino-acid chain: MTTQAAEVAKRRTFAIISHPDAGKTTITEKLLLMGKAIEVAGTVKSRKSDRHATSDWMEMEKQRGISITTSVMQFPYREHIVNLLDTPGHEDFSEDTYRTLTAVDSALMVLDGGKGVEPRTIALMDVCRLRDTPIVSFINKLDRDIRDPIELLDEIEAVLKIKAAPITWPIGCYKDFKGVYHLSGDYIVVYTPGHGHERTEAKIIQKLDSDEARDHLGDMYERFVEELELVQGACHEFEPEAFLKGEMTPVFFGTALGNFGVDHVLDAVVDWAPRPLPRAANERTVEPTEEKFSGFVFKIQANMDPKHRDRIAFMRICSGKYTQGMKMRHARLGKDVRVGDALTFFSSEREHLEEAYAGDIIGLHNHGTIQIGDTFTEGENLGFTGIPHFAPELFRRVRLKDPLKSKQLRQGLQELAEEGATQVFFPERNNDIVLGAVGVLQFDVVASRLKEEYKVECAYEAINVWSARWIECSDEKKLKEFKDKAYENLAVDGGGHLTYLAPTRVNLSLMEERWPEIKFRATREHH.

The tr-type G domain maps to 9–277 (AKRRTFAIIS…AVVDWAPRPL (269 aa)). GTP contacts are provided by residues 18 to 25 (SHPDAGKT), 86 to 90 (DTPGH), and 140 to 143 (NKLD).

The protein belongs to the TRAFAC class translation factor GTPase superfamily. Classic translation factor GTPase family. PrfC subfamily.

It is found in the cytoplasm. Functionally, increases the formation of ribosomal termination complexes and stimulates activities of RF-1 and RF-2. It binds guanine nucleotides and has strong preference for UGA stop codons. It may interact directly with the ribosome. The stimulation of RF-1 and RF-2 is significantly reduced by GTP and GDP, but not by GMP. This is Peptide chain release factor 3 from Ectopseudomonas mendocina (strain ymp) (Pseudomonas mendocina).